Consider the following 386-residue polypeptide: S-adenosylmethionine synthase (386 aa).

His16 contacts ATP. A Mg(2+)-binding site is contributed by Asp18. Glu44 contacts K(+). L-methionine is bound by residues Glu57 and Gln100. Residues Gln100–Glu110 form a flexible loop region. ATP-binding positions include Asp165 to Lys167, Asp240, Arg246 to Lys247, Ala263, and Lys267. Asp240 contacts L-methionine. Lys271 lines the L-methionine pocket.

It belongs to the AdoMet synthase family. Homotetramer; dimer of dimers. Requires Mg(2+) as cofactor. K(+) serves as cofactor.

Its subcellular location is the cytoplasm. It catalyses the reaction L-methionine + ATP + H2O = S-adenosyl-L-methionine + phosphate + diphosphate. It functions in the pathway amino-acid biosynthesis; S-adenosyl-L-methionine biosynthesis; S-adenosyl-L-methionine from L-methionine: step 1/1. In terms of biological role, catalyzes the formation of S-adenosylmethionine (AdoMet) from methionine and ATP. The overall synthetic reaction is composed of two sequential steps, AdoMet formation and the subsequent tripolyphosphate hydrolysis which occurs prior to release of AdoMet from the enzyme. The protein is S-adenosylmethionine synthase of Hahella chejuensis (strain KCTC 2396).